The following is a 241-amino-acid chain: Small ribosomal subunit protein uS2 (241 aa).

This sequence belongs to the universal ribosomal protein uS2 family.

This chain is Small ribosomal subunit protein uS2, found in Photorhabdus laumondii subsp. laumondii (strain DSM 15139 / CIP 105565 / TT01) (Photorhabdus luminescens subsp. laumondii).